The chain runs to 142 residues: DNA-directed RNA polymerase subunit omega (142 aa).

The disordered stretch occupies residues 93–142 (AWSVPEAGGDEGGDASELLDDEGEGAAAGAEPDFSEMDVPLADLADEDKI). The span at 100 to 116 (GGDEGGDASELLDDEGE) shows a compositional bias: acidic residues.

It belongs to the RNA polymerase subunit omega family. As to quaternary structure, the RNAP catalytic core consists of 2 alpha, 1 beta, 1 beta' and 1 omega subunit. When a sigma factor is associated with the core the holoenzyme is formed, which can initiate transcription.

It catalyses the reaction RNA(n) + a ribonucleoside 5'-triphosphate = RNA(n+1) + diphosphate. In terms of biological role, promotes RNA polymerase assembly. Latches the N- and C-terminal regions of the beta' subunit thereby facilitating its interaction with the beta and alpha subunits. This chain is DNA-directed RNA polymerase subunit omega, found in Rhodospirillum centenum (strain ATCC 51521 / SW).